We begin with the raw amino-acid sequence, 215 residues long: Cytochrome b6 (215 aa).

A helical transmembrane segment spans residues 32-52 (IFYCLGGITLTCFLVQVATGF). Cys-35 provides a ligand contact to heme c. Heme b-binding residues include His-86 and His-100. 3 helical membrane passes run 90–110 (ASMMVLMMILHVFRVYLTGGF), 116–136 (LTWVTGVILAVLTASFGVTGY), and 186–206 (LHTFVLPLLTAVFMLMHFPMI). Heme b-binding residues include His-187 and His-202.

The protein belongs to the cytochrome b family. PetB subfamily. In terms of assembly, the 4 large subunits of the cytochrome b6-f complex are cytochrome b6, subunit IV (17 kDa polypeptide, PetD), cytochrome f and the Rieske protein, while the 4 small subunits are PetG, PetL, PetM and PetN. The complex functions as a dimer. Heme b serves as cofactor. Requires heme c as cofactor.

Its subcellular location is the plastid. It localises to the chloroplast thylakoid membrane. In terms of biological role, component of the cytochrome b6-f complex, which mediates electron transfer between photosystem II (PSII) and photosystem I (PSI), cyclic electron flow around PSI, and state transitions. The chain is Cytochrome b6 from Liriodendron tulipifera (Tuliptree).